A 457-amino-acid chain; its full sequence is Serine/threonine-protein phosphatase 2A regulatory subunit B'' subunit gamma (457 aa).

2 EF-hand domains span residues 276-311 (PSAL…TLTS) and 344-379 (KEPA…IQEQ). Ca(2+) contacts are provided by aspartate 289, aspartate 291, asparagine 293, methionine 295, and glutamate 300.

Its subcellular location is the nucleus. It localises to the cytoplasm. Functionally, possible role in the regulation of cell death. The sequence is that of Serine/threonine-protein phosphatase 2A regulatory subunit B'' subunit gamma (ppp2r3c) from Danio rerio (Zebrafish).